The sequence spans 304 residues: NADH-cytochrome b5 reductase 2 (304 aa).

A helical transmembrane segment spans residues 9–29; sequence MLVALAVIGVTVLLFLIKALG. An FAD-binding FR-type domain is found at 43–155; sequence NAKYPLPLIE…RGPNGLLVYK (113 aa). Residues 135–150 and 174–209 each bind FAD; these read DSLK…GPNG and VAKH…KCSL.

It belongs to the flavoprotein pyridine nucleotide cytochrome reductase family. The cofactor is FAD.

The protein localises to the membrane. It carries out the reaction 2 Fe(III)-[cytochrome b5] + NADH = 2 Fe(II)-[cytochrome b5] + NAD(+) + H(+). In terms of biological role, NADH-cytochrome b5 reductases are involved in desaturation and elongation of fatty acids, cholesterol biosynthesis and drug metabolism. The protein is NADH-cytochrome b5 reductase 2 (cyb5r2) of Xenopus tropicalis (Western clawed frog).